Here is a 247-residue protein sequence, read N- to C-terminus: Probable transcriptional regulatory protein YPO2055/y2255/YP_1898 (247 aa).

This sequence belongs to the TACO1 family.

It localises to the cytoplasm. This Yersinia pestis protein is Probable transcriptional regulatory protein YPO2055/y2255/YP_1898.